The following is a 179-amino-acid chain: Inner membrane-spanning protein YciB (179 aa).

The next 5 membrane-spanning stretches (helical) occupy residues 22–42, 50–70, 76–96, 121–141, and 149–169; these read IYAA…YSWV, MALI…FFHN, WKVT…QWVM, LAWA…AFWL, and FKVF…GIYI.

The protein belongs to the YciB family.

It localises to the cell inner membrane. Plays a role in cell envelope biogenesis, maintenance of cell envelope integrity and membrane homeostasis. The polypeptide is Inner membrane-spanning protein YciB (Escherichia coli O127:H6 (strain E2348/69 / EPEC)).